The following is a 965-amino-acid chain: Villin-3 (965 aa).

Gelsolin-like repeat units follow at residues 27-79 (ENFE…DEAG), 150-190 (VHLK…QERA), 262-304 (GQVE…EERK), 401-452 (ANSK…EDQE), 533-573 (NKAL…EQQE), and 635-676 (FQVE…KEKQ). Composition is skewed to low complexity over residues 769–780 (AFNSSSGRTSSP) and 808–828 (SSPS…ASQR). Disordered stretches follow at residues 769-828 (AFNS…ASQR) and 840-906 (TAEK…GVTF). The span at 865-879 (EATEEATEAKEEEEV) shows a compositional bias: acidic residues. Residue Ser-880 is modified to Phosphoserine. In terms of domain architecture, HP spans 900-965 (ETTGVTFTYE…DLLKKKFNLF (66 aa)).

This sequence belongs to the villin/gelsolin family. Expressed in all tissues examined, including root hairs.

It is found in the cytoplasm. The protein localises to the cytoskeleton. Functionally, binds actin and actin filament bundles in a Ca(2+)-insensitive manner, but severs actin filaments in a calcium-dependent manner, regardless of the presence or not of VLN1 (AC O81643). Acts redundantly with VLN2 (AC O81644) to generate thick actin filament bundles, to regulate directional organ growth and in sclerenchyma development. This is Villin-3 from Arabidopsis thaliana (Mouse-ear cress).